The following is an 85-amino-acid chain: U1-theraphotoxin-Hs1a (85 aa).

The first 22 residues, 1-22 (MKVTLIAILTCAAVLVLHTTAA), serve as a signal peptide directing secretion. The propeptide occupies 23–48 (EELEAESQLMEVGMPDTELAAVDEER). Disulfide bonds link Cys52-Cys66, Cys56-Cys77, and Cys71-Cys82.

In terms of assembly, heterodimer composed of the two variants Ile-58 and Gln-58. Expressed by the venom gland.

The protein resides in the secreted. In terms of biological role, lethal neurotoxin that blocks neuromuscular transmission. Acts cooperatively to potentiate the activity of huwentoxin-I. This toxin is active against insects. The polypeptide is U1-theraphotoxin-Hs1a (Cyriopagopus schmidti (Chinese bird spider)).